Reading from the N-terminus, the 79-residue chain is uncharacterized protein (79 aa).

This is an uncharacterized protein from Methanocaldococcus jannaschii (strain ATCC 43067 / DSM 2661 / JAL-1 / JCM 10045 / NBRC 100440) (Methanococcus jannaschii).